A 129-amino-acid chain; its full sequence is UPF0344 protein SAB0838 (129 aa).

4 helical membrane passes run 1–21 (MLHL…ATYL), 36–56 (LHMV…WILI), 67–87 (MLLT…EVSI), and 99–119 (MFWI…ILPL).

It belongs to the UPF0344 family.

The protein resides in the cell membrane. The sequence is that of UPF0344 protein SAB0838 from Staphylococcus aureus (strain bovine RF122 / ET3-1).